Consider the following 219-residue polypeptide: Biofilm-associated metzincin protease inhibitor (219 aa).

The helical transmembrane segment at 4-24 (TWIYAASAAAIGGALIGGWLL) threads the bilayer. Basic and acidic residues predominate over residues 191-204 (DIAARSDPHGDHVD). The interval 191-219 (DIAARSDPHGDHVDAPLAELPPMPPPAQG) is disordered. Residues 209–219 (ELPPMPPPAQG) are compositionally biased toward pro residues.

The protein localises to the cell membrane. Inhibitor of the metalloendopeptidase Mep72. Forms a protein-protein complex with the protease, which is the product of its coregulated adjacent gene, and probably prevents premature protease activity until the protein has been secreted. This Pseudomonas aeruginosa (strain ATCC 15692 / DSM 22644 / CIP 104116 / JCM 14847 / LMG 12228 / 1C / PRS 101 / PAO1) protein is Biofilm-associated metzincin protease inhibitor.